The primary structure comprises 271 residues: MFSIQQPLLVFSDLDGTLLDSHSYDWQPAAPWLSRLHEANIPVILCSSKTSAEMLYLQKMLGLQGLPLIAENGAVIQLAEQWQDIDGFPRIISGISHGEICQVLNTLREKEHFKFTTFDDVDDATIAEWTGLSRSQAALTQLHEASVTLIWRDSDEHMAQFIARLNELGLQFMQGARFWHVLDASAGKDQAANWIIATYQQLSGRRPTTLGLGDGPNDAPLLEVMDYAVIVKGLNREGVHLHDEDPARVWRTQREGPEGWREGLDHFFPAR.

The active-site Nucleophile is D13. Mg(2+)-binding residues include D13, D15, and D214.

This sequence belongs to the HAD-like hydrolase superfamily. MPGP family. The cofactor is Mg(2+).

Its subcellular location is the cytoplasm. The enzyme catalyses 2-O-(alpha-D-mannosyl)-3-phosphoglycerate + H2O = (2R)-2-O-(alpha-D-mannosyl)-glycerate + phosphate. This chain is Mannosyl-3-phosphoglycerate phosphatase, found in Escherichia coli O7:K1 (strain IAI39 / ExPEC).